The following is a 699-amino-acid chain: Polyribonucleotide nucleotidyltransferase (699 aa).

Residues Asp-485 and Asp-491 each contribute to the Mg(2+) site. Residues 552-611 (PRITTIKINPEKIRDVIGKGGAVIRALTEETGTTIELEDDGTVKIASSNGEATKEAIRRI) enclose the KH domain. Residues 621-689 (GRIYNGKVIR…RQGRVRLSIK (69 aa)) enclose the S1 motif domain.

It belongs to the polyribonucleotide nucleotidyltransferase family. As to quaternary structure, component of the RNA degradosome, which is a multiprotein complex involved in RNA processing and mRNA degradation. It depends on Mg(2+) as a cofactor.

The protein resides in the cytoplasm. The catalysed reaction is RNA(n+1) + phosphate = RNA(n) + a ribonucleoside 5'-diphosphate. In terms of biological role, involved in mRNA degradation. Catalyzes the phosphorolysis of single-stranded polyribonucleotides processively in the 3'- to 5'-direction. In Shewanella sp. (strain MR-4), this protein is Polyribonucleotide nucleotidyltransferase.